A 65-amino-acid polypeptide reads, in one-letter code: Large ribosomal subunit protein bL35 (65 aa).

It belongs to the bacterial ribosomal protein bL35 family.

The chain is Large ribosomal subunit protein bL35 from Sorangium cellulosum (strain So ce56) (Polyangium cellulosum (strain So ce56)).